A 443-amino-acid polypeptide reads, in one-letter code: Tol-Pal system protein TolB (443 aa).

The signal sequence occupies residues 1–33; sequence MKIGIINTKIRTVFSAFACMIAASLVCTMPARA.

Belongs to the TolB family. As to quaternary structure, the Tol-Pal system is composed of five core proteins: the inner membrane proteins TolA, TolQ and TolR, the periplasmic protein TolB and the outer membrane protein Pal. They form a network linking the inner and outer membranes and the peptidoglycan layer.

The protein resides in the periplasm. In terms of biological role, part of the Tol-Pal system, which plays a role in outer membrane invagination during cell division and is important for maintaining outer membrane integrity. The protein is Tol-Pal system protein TolB of Brucella ovis (strain ATCC 25840 / 63/290 / NCTC 10512).